Consider the following 352-residue polypeptide: Holliday junction branch migration complex subunit RuvB (352 aa).

The interval 4–185 (PDRLISAVSG…FGIVQRLEFY (182 aa)) is large ATPase domain (RuvB-L). ATP is bound by residues Ile24, Arg25, Gly66, Lys69, Thr70, Thr71, 132 to 134 (EDF), Arg175, Tyr185, and Arg222. Thr70 contacts Mg(2+). The interval 186-256 (NVEDLATIVS…IADKALNLLD (71 aa)) is small ATPAse domain (RuvB-S). A head domain (RuvB-H) region spans residues 259–352 (ERGFDHLDRR…TDLFTSEDGN (94 aa)). The DNA site is built by Arg295, Arg314, and Arg319.

This sequence belongs to the RuvB family. In terms of assembly, homohexamer. Forms an RuvA(8)-RuvB(12)-Holliday junction (HJ) complex. HJ DNA is sandwiched between 2 RuvA tetramers; dsDNA enters through RuvA and exits via RuvB. An RuvB hexamer assembles on each DNA strand where it exits the tetramer. Each RuvB hexamer is contacted by two RuvA subunits (via domain III) on 2 adjacent RuvB subunits; this complex drives branch migration. In the full resolvosome a probable DNA-RuvA(4)-RuvB(12)-RuvC(2) complex forms which resolves the HJ.

Its subcellular location is the cytoplasm. It carries out the reaction ATP + H2O = ADP + phosphate + H(+). Its function is as follows. The RuvA-RuvB-RuvC complex processes Holliday junction (HJ) DNA during genetic recombination and DNA repair, while the RuvA-RuvB complex plays an important role in the rescue of blocked DNA replication forks via replication fork reversal (RFR). RuvA specifically binds to HJ cruciform DNA, conferring on it an open structure. The RuvB hexamer acts as an ATP-dependent pump, pulling dsDNA into and through the RuvAB complex. RuvB forms 2 homohexamers on either side of HJ DNA bound by 1 or 2 RuvA tetramers; 4 subunits per hexamer contact DNA at a time. Coordinated motions by a converter formed by DNA-disengaged RuvB subunits stimulates ATP hydrolysis and nucleotide exchange. Immobilization of the converter enables RuvB to convert the ATP-contained energy into a lever motion, pulling 2 nucleotides of DNA out of the RuvA tetramer per ATP hydrolyzed, thus driving DNA branch migration. The RuvB motors rotate together with the DNA substrate, which together with the progressing nucleotide cycle form the mechanistic basis for DNA recombination by continuous HJ branch migration. Branch migration allows RuvC to scan DNA until it finds its consensus sequence, where it cleaves and resolves cruciform DNA. The sequence is that of Holliday junction branch migration complex subunit RuvB from Pseudomonas aeruginosa (strain LESB58).